Here is a 668-residue protein sequence, read N- to C-terminus: Small ribosomal subunit protein mS81 (rPPR8) (668 aa).

Residues methionine 1 to phenylalanine 36 constitute a mitochondrion transit peptide. PPR repeat units lie at residues aspartate 286 to valine 320, glutamate 321 to serine 355, threonine 396 to proline 430, serine 431 to leucine 465, aspartate 466 to asparagine 496, alanine 502 to proline 537, and lysine 543 to proline 577.

It belongs to the PPR family. P subfamily. In terms of assembly, component of the mitochondrial ribosome small subunit.

It localises to the mitochondrion. In Arabidopsis thaliana (Mouse-ear cress), this protein is Small ribosomal subunit protein mS81 (rPPR8).